The sequence spans 137 residues: NADH-quinone oxidoreductase subunit A (137 aa).

3 helical membrane passes run 12 to 32 (WGFAIFLLGVVGLCAFMLGLS), 66 to 86 (FYLVAMLFVIFDIEALFLFAW), and 95 to 115 (WTGFVEALVFIAILLAGLVYL).

Belongs to the complex I subunit 3 family. In terms of assembly, NDH-1 is composed of 13 different subunits. Subunits NuoA, H, J, K, L, M, N constitute the membrane sector of the complex.

The protein localises to the cell inner membrane. It carries out the reaction a quinone + NADH + 5 H(+)(in) = a quinol + NAD(+) + 4 H(+)(out). NDH-1 shuttles electrons from NADH, via FMN and iron-sulfur (Fe-S) centers, to quinones in the respiratory chain. The immediate electron acceptor for the enzyme in this species is believed to be ubiquinone. Couples the redox reaction to proton translocation (for every two electrons transferred, four hydrogen ions are translocated across the cytoplasmic membrane), and thus conserves the redox energy in a proton gradient. The chain is NADH-quinone oxidoreductase subunit A from Pseudomonas savastanoi pv. phaseolicola (strain 1448A / Race 6) (Pseudomonas syringae pv. phaseolicola (strain 1448A / Race 6)).